Here is a 2510-residue protein sequence, read N- to C-terminus: Highly reducing polyketide synthase g433 (2510 aa).

Residues 1 to 54 (MAPGRTDVTVAENGNGLHTAHNGVSNGTSNGTNGTSHTSNGTNSSAKTTSNGVH) form a disordered region. Residues 22 to 45 (NGVSNGTSNGTNGTSHTSNGTNSS) show a composition bias toward low complexity. In terms of domain architecture, Ketosynthase family 3 (KS3) spans 58-477 (DIPIAIVGMG…GANAHAVIDS (420 aa)). Catalysis depends on for beta-ketoacyl synthase activity residues Cys229, His365, and His400. Residues 574-880 (FVFTGQGAQW…VPTLVRGQND (307 aa)) are malonyl-CoA:ACP transacylase (MAT) domain. An N-terminal hotdog fold region spans residues 942–1070 (HDLLGCQVFE…GQVKAGRADS (129 aa)). The tract at residues 942-1226 (HDLLGCQVFE…NLRLAPAADD (285 aa)) is dehydratase (DH) domain. Residues 942–1229 (HDLLGCQVFE…LAPAADDTGG (288 aa)) enclose the PKS/mFAS DH domain. His974 functions as the Proton acceptor; for dehydratase activity in the catalytic mechanism. The interval 1083-1229 (PRKVSSTRWY…LAPAADDTGG (147 aa)) is C-terminal hotdog fold. The active-site Proton donor; for dehydratase activity is the Asp1144. Residues 1395-1574 (DFLGLVSHDK…FDGAEAVIYD (180 aa)) form a methyltransferase (CMet) domain region. An enoyl reductase (ER) (ER) domain region spans residues 1787–2097 (GSLKTLRWVQ…KGQHMGKLVI (311 aa)). The segment at 2122 to 2296 (SYLLVGGLGG…ASVLDISIIE (175 aa)) is ketoreductase (KR) domain. Residues 2419 to 2496 (SSVSFLANEI…KLGEAAAEGL (78 aa)) form the Carrier domain. Ser2456 is subject to O-(pantetheine 4'-phosphoryl)serine.

It participates in mycotoxin biosynthesis. Highly reducing polyketide synthase; part of the gene cluster that mediates the biosynthesis of 1233A, a natural compound known as an inhibitor of HMG-CoA synthase in the mevalonate pathway and with antibacterial and antifungal activities. The highly reducing polyketide synthase g433 gene is responsible for the 1233A backbone biosynthesis and the cytochrome P450 monooxygenase g430 catalyzes oxidation of the backbone. This Fusarium sp protein is Highly reducing polyketide synthase g433.